The sequence spans 323 residues: Aspartate carbamoyltransferase catalytic subunit (323 aa).

Carbamoyl phosphate is bound by residues Arg65 and Thr66. Residue Lys93 participates in L-aspartate binding. Positions 115, 149, and 152 each coordinate carbamoyl phosphate. Residues Arg182 and Arg237 each contribute to the L-aspartate site. Carbamoyl phosphate is bound by residues Gly278 and Pro279.

The protein belongs to the aspartate/ornithine carbamoyltransferase superfamily. ATCase family. In terms of assembly, heterododecamer (2C3:3R2) of six catalytic PyrB chains organized as two trimers (C3), and six regulatory PyrI chains organized as three dimers (R2).

The catalysed reaction is carbamoyl phosphate + L-aspartate = N-carbamoyl-L-aspartate + phosphate + H(+). The protein operates within pyrimidine metabolism; UMP biosynthesis via de novo pathway; (S)-dihydroorotate from bicarbonate: step 2/3. In terms of biological role, catalyzes the condensation of carbamoyl phosphate and aspartate to form carbamoyl aspartate and inorganic phosphate, the committed step in the de novo pyrimidine nucleotide biosynthesis pathway. This chain is Aspartate carbamoyltransferase catalytic subunit, found in Aromatoleum aromaticum (strain DSM 19018 / LMG 30748 / EbN1) (Azoarcus sp. (strain EbN1)).